A 333-amino-acid polypeptide reads, in one-letter code: D-glutamate N-acetyltransferase (333 aa).

This sequence belongs to the N-acetyltransferase DgcN family.

The catalysed reaction is D-glutamate + acetyl-CoA = N-acetyl-D-glutamate + CoA + H(+). It functions in the pathway amino-acid degradation. Functionally, N-acetyltransferase involved in a deamination-independent D-glutamate degradation pathway, named the DgcN-DgcA pathway. Catalyzes the transfer of the acetyl moiety from acetyl-CoA to D-glutamate to generate N-acetyl-D-glutamate. This chain is D-glutamate N-acetyltransferase, found in Tritonibacter scottomollicae (Epibacterium scottomollicae).